We begin with the raw amino-acid sequence, 301 residues long: Haloalkane dehalogenase (301 aa).

An AB hydrolase-1 domain is found at 47-284; sequence PPIVLLHGEP…INASHFIQED (238 aa). The active-site Nucleophile is the Asp-123. Catalysis depends on Asp-250, which acts as the Proton donor. His-279 serves as the catalytic Proton acceptor.

It belongs to the haloalkane dehalogenase family. Type 1 subfamily. Monomer.

The enzyme catalyses 1-haloalkane + H2O = a halide anion + a primary alcohol + H(+). Catalyzes hydrolytic cleavage of carbon-halogen bonds in halogenated aliphatic compounds, leading to the formation of the corresponding primary alcohols, halide ions and protons. The polypeptide is Haloalkane dehalogenase (Mycolicibacterium paratuberculosis (strain ATCC BAA-968 / K-10) (Mycobacterium paratuberculosis)).